Reading from the N-terminus, the 248-residue chain is UPF0246 protein A1I_02510 (248 aa).

This sequence belongs to the UPF0246 family.

This Rickettsia bellii (strain OSU 85-389) protein is UPF0246 protein A1I_02510.